Consider the following 111-residue polypeptide: Small ribosomal subunit protein bS16 (111 aa).

The tract at residues E92–E111 is disordered. Positions E100–E111 are enriched in acidic residues.

This sequence belongs to the bacterial ribosomal protein bS16 family.

The polypeptide is Small ribosomal subunit protein bS16 (Petrotoga mobilis (strain DSM 10674 / SJ95)).